Consider the following 623-residue polypeptide: Transketolase (623 aa).

The residue at position 1 (M1) is an N-acetylmethionine. N6-acetyllysine occurs at positions 6 and 11. A substrate-binding site is contributed by H37. Thiamine diphosphate is bound by residues S40 and H77. The residue at position 104 (S104) is a Phosphoserine. Residue 123-125 (GSL) participates in thiamine diphosphate binding. N6-acetyllysine is present on K144. D155 provides a ligand contact to Mg(2+). Thiamine diphosphate contacts are provided by G156 and N185. Mg(2+) contacts are provided by N185 and L187. Residues K204, K232, and K241 each carry the N6-acetyllysine modification. Thiamine diphosphate-binding residues include K244 and H258. H258 serves as a coordination point for substrate. N6-acetyllysine is present on K260. A Phosphotyrosine modification is found at Y275. T287 carries the post-translational modification Phosphothreonine. S295 is subject to Phosphoserine. Residues R318 and S345 each contribute to the substrate site. Phosphoserine is present on S345. A Glycyl lysine isopeptide (Lys-Gly) (interchain with G-Cter in SUMO2) cross-link involves residue K352. The Proton donor role is filled by E366. F392 is a binding site for thiamine diphosphate. Substrate-binding residues include H416 and D424. Q428 serves as a coordination point for thiamine diphosphate. Position 474 (R474) interacts with substrate. N6-acetyllysine occurs at positions 538 and 603.

This sequence belongs to the transketolase family. As to quaternary structure, homodimer. Mg(2+) is required as a cofactor. Ca(2+) serves as cofactor. The cofactor is Mn(2+). It depends on Co(2+) as a cofactor. Requires thiamine diphosphate as cofactor.

The enzyme catalyses D-sedoheptulose 7-phosphate + D-glyceraldehyde 3-phosphate = aldehydo-D-ribose 5-phosphate + D-xylulose 5-phosphate. Catalyzes the transfer of a two-carbon ketol group from a ketose donor to an aldose acceptor, via a covalent intermediate with the cofactor thiamine pyrophosphate. The sequence is that of Transketolase (Tkt) from Rattus norvegicus (Rat).